A 109-amino-acid polypeptide reads, in one-letter code: Small ribosomal subunit protein uS17 (109 aa).

It belongs to the universal ribosomal protein uS17 family. Part of the 30S ribosomal subunit.

Its function is as follows. One of the primary rRNA binding proteins, it binds specifically to the 5'-end of 16S ribosomal RNA. This Thermoplasma volcanium (strain ATCC 51530 / DSM 4299 / JCM 9571 / NBRC 15438 / GSS1) protein is Small ribosomal subunit protein uS17.